A 302-amino-acid polypeptide reads, in one-letter code: uncharacterized protein (302 aa).

The protein belongs to the HAD-like hydrolase superfamily.

Its subcellular location is the cytoplasm. It is found in the nucleus. This is an uncharacterized protein from Schizosaccharomyces pombe (strain 972 / ATCC 24843) (Fission yeast).